The sequence spans 42 residues: Photosystem I reaction center subunit IX (42 aa).

Residues 7-27 (YLSVAPVLSTLWFGALAGLLI) form a helical membrane-spanning segment.

The protein belongs to the PsaJ family.

Its subcellular location is the plastid. The protein localises to the chloroplast thylakoid membrane. Its function is as follows. May help in the organization of the PsaE and PsaF subunits. The protein is Photosystem I reaction center subunit IX of Agrostis stolonifera (Creeping bentgrass).